The chain runs to 413 residues: Hemolin (413 aa).

The N-terminal stretch at 1–19 (MAFKSIAVLSACIIVGSAL) is a signal peptide. Ig-like C2-type domains are found at residues 25 to 112 (PVLK…RVIS), 122 to 211 (PAKT…EEVV), 233 to 322 (PQYV…LKLT), and 327 to 413 (PKYE…VQVN). 4 cysteine pairs are disulfide-bonded: cysteine 46-cysteine 97, cysteine 140-cysteine 199, cysteine 252-cysteine 305, and cysteine 349-cysteine 395. Residue asparagine 283 is glycosylated (N-linked (GlcNAc...) asparagine).

Belongs to the hemolin family. As to expression, hemolymph.

It localises to the secreted. The protein resides in the extracellular space. In terms of biological role, insect-immune protein. Forms a protein complex at the bacterial surface. Can inhibit hemocyte aggregation. The protein is Hemolin of Hyalophora cecropia (Cecropia moth).